The chain runs to 170 residues: MDVTIQHPWFRRALGPFYPSRLFDQFFGEGLFEYDLLPFLSSTISPYYRQSLFRTVLDSGISEVRSDRDKFVIFLDVKHFSPEDLTVKVLDDFVEIHGKHNERQDDHGYISREFHRRYRLPTAVDQSALSCSLSADGMLTFSGPKIVDPSHSERTIPVSREEKPSSAPSS.

The residue at position 1 (Met-1) is an N-acetylmethionine. Residues 1 to 63 are required for complex formation with BFSP1 and BFSP2; sequence MDVTIQHPWF…RTVLDSGISE (63 aa). Deamidated glutamine; partial is present on Gln-6. Phosphoserine is present on Ser-45. Gln-50 is modified (deamidated glutamine; partial). The sHSP domain maps to 52 to 161; that stretch reads LFRTVLDSGI…SERTIPVSRE (110 aa). N6-acetyllysine occurs at positions 70 and 99. His-100 provides a ligand contact to Zn(2+). The residue at position 101 (Asn-101) is a Deamidated asparagine; partial. Residues Glu-102, His-107, and His-151 each contribute to the Zn(2+) site. The segment at 144–170 is disordered; that stretch reads PKIVDPSHSERTIPVSREEKPSSAPSS. The span at 148–164 shows a compositional bias: basic and acidic residues; sequence DPSHSERTIPVSREEKP. A glycan (O-linked (GlcNAc) serine) is linked at Ser-159.

This sequence belongs to the small heat shock protein (HSP20) family. As to quaternary structure, heteromer composed of three CRYAA and one CRYAB subunits. Inter-subunit bridging via zinc ions enhances stability, which is crucial as there is no protein turn over in the lens. Can also form homodimers and homotetramers (dimers of dimers) which serve as the building blocks of homooligomers. Within homooligomers, the zinc-binding motif is created from residues of 3 different molecules. His-100 and Glu-102 from one molecule are ligands of the zinc ion, and His-107 and His-151 residues from additional molecules complete the site with tetrahedral coordination geometry. Part of a complex required for lens intermediate filament formation composed of BFSP1, BFSP2 and CRYAA. In terms of processing, acetylation at Lys-70 may increase chaperone activity. Undergoes age-dependent proteolytical cleavage at the C-terminus.

The protein localises to the cytoplasm. It localises to the nucleus. Its function is as follows. Contributes to the transparency and refractive index of the lens. Acts as a chaperone, preventing aggregation of various proteins under a wide range of stress conditions. Required for the correct formation of lens intermediate filaments as part of a complex composed of BFSP1, BFSP2 and CRYAA. In Choloepus hoffmanni (Hoffmann's two-fingered sloth), this protein is Alpha-crystallin A chain (CRYAA).